Reading from the N-terminus, the 97-residue chain is MTSSPVSRVVYNGKRTSSPRSPPSSSEIFTPAHEENVRFIYEAWQGVERDLRGQVPGGERGLVEEYVEKVPNPSLKTFKPIDLSDLKRRSTQDAKKS.

The segment at 1–30 is disordered; sequence MTSSPVSRVVYNGKRTSSPRSPPSSSEIFT. 2 positions are modified to phosphoserine: Ser21 and Ser24. Thr30 carries the phosphothreonine modification. Tyr41 carries the phosphotyrosine modification. At Lys79 the chain carries N6-acetyllysine. The PXDLS motif signature appears at 80-84; the sequence is PIDLS.

Belongs to the MCRIP family. In terms of assembly, interacts (unphosphorylated form, via the PXDLS motif) with CTBP1, competitively inhibiting CTBP-ZEB1 interaction. Interacts with CTBP2. Interacts with MCRIP2. Interacts with DDX6. Phosphorylation by MAPK3/1 (ERK1/2) regulates MCRIP1 binding to CTBP(s).

The protein resides in the nucleus. The protein localises to the cytoplasm. Its subcellular location is the stress granule. Functionally, the phosphorylation status of MCRIP1 functions as a molecular switch to regulate epithelial-mesenchymal transition. Unphosphorylated MCRIP1 binds to and inhibits the transcriptional corepressor CTBP(s). When phosphorylated by MAPK/ERK, MCRIP1 releases CTBP(s) resulting in transcriptional silencing of the E-cadherin gene and induction of epithelial-mesenchymal transition. The chain is Mapk-regulated corepressor-interacting protein 1 from Homo sapiens (Human).